The chain runs to 339 residues: Proto-oncogene serine/threonine-protein kinase mos (339 aa).

Positions 61–335 (VCLLHRLGSG…LLQKDLKAFR (275 aa)) constitute a Protein kinase domain. ATP is bound by residues 67-75 (LGSGGFGSV) and lysine 88. Aspartate 196 acts as the Proton acceptor in catalysis.

Belongs to the protein kinase superfamily. Ser/Thr protein kinase family. In terms of assembly, interacts with MAP2K1/MEK1. Expressed mainly in gonadal tissues, and cardiac and skeletal muscles.

It localises to the cytoplasm. It catalyses the reaction L-seryl-[protein] + ATP = O-phospho-L-seryl-[protein] + ADP + H(+). It carries out the reaction L-threonyl-[protein] + ATP = O-phospho-L-threonyl-[protein] + ADP + H(+). Its function is as follows. Serine/threonine kinase involved in the regulation of MAPK signaling. Is an activator of the ERK1/2 signaling cascade playing an essential role in the stimulation of oocyte maturation. This chain is Proto-oncogene serine/threonine-protein kinase mos, found in Rattus norvegicus (Rat).